A 104-amino-acid chain; its full sequence is Fluoride-specific ion channel FluC 2 (104 aa).

The next 3 helical transmembrane spans lie at 22–42 (IGPYVGTFIANMAACVVLAAV), 48–68 (LVMAAVGTGFAGALSTWSTLA), and 82–102 (MLLGYTTATILGGMVAVWCGL). Na(+) is bound by residues Gly59 and Ser62.

It belongs to the fluoride channel Fluc/FEX (TC 1.A.43) family.

It is found in the cell membrane. The enzyme catalyses fluoride(in) = fluoride(out). Its activity is regulated as follows. Na(+) is not transported, but it plays an essential structural role and its presence is essential for fluoride channel function. Fluoride-specific ion channel. Important for reducing fluoride concentration in the cell, thus reducing its toxicity. This is Fluoride-specific ion channel FluC 2 from Corynebacterium diphtheriae (strain ATCC 700971 / NCTC 13129 / Biotype gravis).